The sequence spans 838 residues: G-protein coupled receptor-associated sorting protein 2 (838 aa).

Disordered stretches follow at residues 1-122 (MTGA…GARP), 218-292 (ASNE…SNPF), 349-368 (RFRHRDKEDPNTALKLRAQK), and 531-552 (LELSPEGEEQESLLQPDQPSPE). Basic and acidic residues predominate over residues 13 to 31 (KPEKKAGEEVIAGPEREND). Positions 220 to 245 (NESGFWSADETSTASSFWTGEETSVR) are enriched in polar residues. A compositionally biased stretch (basic residues) spans 255-271 (RSRHRAKHQTNPRSRPR). Residues Ser282 and Ser284 each carry the phosphoserine modification. The span at 542 to 552 (SLLQPDQPSPE) shows a compositional bias: polar residues.

Belongs to the GPRASP family. In terms of assembly, interacts with cytoplasmic tails of a variety of G-protein coupled receptors such as muscarinic acetylcholine receptor M1/CHRM1 and calcitonin receptor/CALCR. In terms of tissue distribution, expressed in the brain.

May play a role in regulation of a variety of G-protein coupled receptors. This Homo sapiens (Human) protein is G-protein coupled receptor-associated sorting protein 2 (GPRASP2).